Consider the following 901-residue polypeptide: Probable inorganic carbon transporter subunit DabA (901 aa).

Cysteine 424, aspartate 426, histidine 606, and cysteine 621 together coordinate Zn(2+).

It belongs to the inorganic carbon transporter (TC 9.A.2) DabA family. In terms of assembly, forms a complex with DabB. The cofactor is Zn(2+).

The protein resides in the cell membrane. Functionally, part of an energy-coupled inorganic carbon pump. The polypeptide is Probable inorganic carbon transporter subunit DabA (Staphylococcus aureus (strain MSSA476)).